A 64-amino-acid chain; its full sequence is Large ribosomal subunit protein bL35 (64 aa).

The span at 1–17 (MKQKTHSGIKKRIKKTG) shows a compositional bias: basic residues. Residues 1-64 (MKQKTHSGIK…KRVNRLLGEG (64 aa)) form a disordered region. Basic and acidic residues predominate over residues 21–33 (LRREQANRRHLLE).

It belongs to the bacterial ribosomal protein bL35 family.

The protein is Large ribosomal subunit protein bL35 of Corynebacterium kroppenstedtii (strain DSM 44385 / JCM 11950 / CIP 105744 / CCUG 35717).